Here is a 361-residue protein sequence, read N- to C-terminus: Protein-L-isoaspartate O-methyltransferase domain-containing protein 2 (361 aa).

Gly2 is lipidated: N-myristoyl glycine. Ser64 is an active-site residue. AdoMet binding motif stretches follow at residues 85–94 (LNLGSGTGYL), 160–164 (YDRVY), and 181–191 (LKVGGILVMPL). The segment at 240–250 (VRSLQDLARIA) is BC-box. The segment at 303–336 (SNPSDDNSCEDLEEERREEEEKTPPETKPDPPVN) is disordered. The segment covering 309 to 320 (NSCEDLEEERRE) has biased composition (acidic residues). The segment covering 321 to 331 (EEEKTPPETKP) has biased composition (basic and acidic residues). Residues 345–348 (LPLP) are CUL-box.

The protein belongs to the methyltransferase superfamily. L-isoaspartyl/D-aspartyl protein methyltransferase family.

It is found in the cytoplasm. Functionally, may act as a substrate recognition component of an ECS (Elongin BC-CUL5-SOCS-box protein) E3 ubiquitin ligase complex which mediates the ubiquitination and subsequent proteasomal degradation of target proteins. May bind to the methyltransferase cofactor S-adenosylmethionine (AdoMet) via the N-terminal AdoMet binding motif, but probably does not display methyltransferase activity. This is Protein-L-isoaspartate O-methyltransferase domain-containing protein 2 (PCMTD2) from Homo sapiens (Human).